Consider the following 297-residue polypeptide: Succinate dehydrogenase [ubiquinone] iron-sulfur subunit, mitochondrial (297 aa).

The interval 33-55 is disordered; it reads TAEALSASRPPIKETKTSTVKEP. The 80-residue stretch at 78–157 folds into the 2Fe-2S ferredoxin-type domain; that stretch reads DKPRMQSYTL…ETRIYPLPHT (80 aa). [2Fe-2S] cluster is bound by residues Cys117, Cys122, Cys125, and Cys137. The region spanning 199–229 is the 4Fe-4S ferredoxin-type domain; it reads DRKKLDGLYECILCACCSTSCPSYWWNSEEY. The [4Fe-4S] cluster site is built by Cys209, Cys212, and Cys215. [3Fe-4S] cluster is bound at residue Cys219. Trp224 serves as a coordination point for a ubiquinone. Residues Cys266 and Cys272 each coordinate [3Fe-4S] cluster. Residue Cys276 coordinates [4Fe-4S] cluster.

This sequence belongs to the succinate dehydrogenase/fumarate reductase iron-sulfur protein family. In terms of assembly, component of complex II composed of four subunits: a flavoprotein (FP), an iron-sulfur protein (IP), and a cytochrome b composed of a large and a small subunit. Requires [2Fe-2S] cluster as cofactor. [3Fe-4S] cluster serves as cofactor. It depends on [4Fe-4S] cluster as a cofactor.

The protein resides in the mitochondrion inner membrane. It carries out the reaction a quinone + succinate = fumarate + a quinol. Its pathway is carbohydrate metabolism; tricarboxylic acid cycle; fumarate from succinate (eukaryal route): step 1/1. Functionally, iron-sulfur protein (IP) subunit of succinate dehydrogenase (SDH) that is involved in complex II of the mitochondrial electron transport chain and is responsible for transferring electrons from succinate to ubiquinone (coenzyme Q). In Zymoseptoria tritici (Speckled leaf blotch fungus), this protein is Succinate dehydrogenase [ubiquinone] iron-sulfur subunit, mitochondrial (SDH2).